The primary structure comprises 568 residues: Small ribosomal subunit protein bS1 (568 aa).

S1 motif domains lie at 27–93, 111–177, 198–266, 283–353, 370–440, and 459–530; these read GYVA…LSRE, GERV…VSRR, GQVV…LGMK, GKKI…LGLK, GTEV…LGIK, and NAVV…LSIK.

It belongs to the bacterial ribosomal protein bS1 family.

Binds mRNA; thus facilitating recognition of the initiation point. It is needed to translate mRNA with a short Shine-Dalgarno (SD) purine-rich sequence. The polypeptide is Small ribosomal subunit protein bS1 (rpsA) (Rhizobium meliloti (strain 1021) (Ensifer meliloti)).